The sequence spans 152 residues: Deoxyuridine 5'-triphosphate nucleotidohydrolase (152 aa).

Substrate-binding positions include 71–73 (RSG), N84, 88–90 (LID), and M98.

It belongs to the dUTPase family. The cofactor is Mg(2+).

It catalyses the reaction dUTP + H2O = dUMP + diphosphate + H(+). It participates in pyrimidine metabolism; dUMP biosynthesis; dUMP from dCTP (dUTP route): step 2/2. This enzyme is involved in nucleotide metabolism: it produces dUMP, the immediate precursor of thymidine nucleotides and it decreases the intracellular concentration of dUTP so that uracil cannot be incorporated into DNA. This is Deoxyuridine 5'-triphosphate nucleotidohydrolase from Photorhabdus laumondii subsp. laumondii (strain DSM 15139 / CIP 105565 / TT01) (Photorhabdus luminescens subsp. laumondii).